A 356-amino-acid chain; its full sequence is Branched-chain-amino-acid aminotransferase 6 (356 aa).

The residue at position 199 (Lys199) is an N6-(pyridoxal phosphate)lysine.

This sequence belongs to the class-IV pyridoxal-phosphate-dependent aminotransferase family. The cofactor is pyridoxal 5'-phosphate.

The protein localises to the cytoplasm. The catalysed reaction is L-leucine + 2-oxoglutarate = 4-methyl-2-oxopentanoate + L-glutamate. It carries out the reaction L-isoleucine + 2-oxoglutarate = (S)-3-methyl-2-oxopentanoate + L-glutamate. It catalyses the reaction L-valine + 2-oxoglutarate = 3-methyl-2-oxobutanoate + L-glutamate. It functions in the pathway amino-acid biosynthesis; L-isoleucine biosynthesis; L-isoleucine from 2-oxobutanoate: step 4/4. Its pathway is amino-acid biosynthesis; L-leucine biosynthesis; L-leucine from 3-methyl-2-oxobutanoate: step 4/4. It participates in amino-acid biosynthesis; L-valine biosynthesis; L-valine from pyruvate: step 4/4. Converts 2-oxo acids to branched-chain amino acids. Acts on leucine, isoleucine and valine. This is Branched-chain-amino-acid aminotransferase 6 (BCAT6) from Arabidopsis thaliana (Mouse-ear cress).